The primary structure comprises 410 residues: LL-diaminopimelate aminotransferase (410 aa).

Substrate is bound by residues Tyr15 and Gly42. Pyridoxal 5'-phosphate-binding positions include Tyr72, 108–109 (AK), Tyr132, Asn188, Tyr219, and 247–249 (SFS). Residues Lys109, Tyr132, and Asn188 each coordinate substrate. At Lys250 the chain carries N6-(pyridoxal phosphate)lysine. 2 residues coordinate pyridoxal 5'-phosphate: Arg258 and Asn293. The substrate site is built by Asn293 and Arg389.

Belongs to the class-I pyridoxal-phosphate-dependent aminotransferase family. LL-diaminopimelate aminotransferase subfamily. As to quaternary structure, homodimer. The cofactor is pyridoxal 5'-phosphate.

The catalysed reaction is (2S,6S)-2,6-diaminopimelate + 2-oxoglutarate = (S)-2,3,4,5-tetrahydrodipicolinate + L-glutamate + H2O + H(+). It participates in amino-acid biosynthesis; L-lysine biosynthesis via DAP pathway; LL-2,6-diaminopimelate from (S)-tetrahydrodipicolinate (aminotransferase route): step 1/1. Involved in the synthesis of meso-diaminopimelate (m-DAP or DL-DAP), required for both lysine and peptidoglycan biosynthesis. Catalyzes the direct conversion of tetrahydrodipicolinate to LL-diaminopimelate. Can also use m-DAP instead of LL-DAP as the amino-group donor. This chain is LL-diaminopimelate aminotransferase, found in Bacteroides fragilis (strain ATCC 25285 / DSM 2151 / CCUG 4856 / JCM 11019 / LMG 10263 / NCTC 9343 / Onslow / VPI 2553 / EN-2).